A 708-amino-acid chain; its full sequence is Quinohemoprotein alcohol dehydrogenase (708 aa).

The N-terminal stretch at 1–31 (MERLIDNSHGWPGRMVWLLAACLGSAAAFAQ) is a signal peptide. Glutamate 101 contributes to the pyrroloquinoline quinone binding site. Cysteine 147 and cysteine 148 form a disulfide bridge. Pyrroloquinoline quinone is bound by residues arginine 153, threonine 198, and 214-215 (GA). Glutamate 216 lines the Ca(2+) pocket. Residue threonine 274 participates in pyrroloquinoline quinone binding. Ca(2+) is bound by residues asparagine 294 and aspartate 339. Aspartate 339 serves as the catalytic Proton acceptor. Residues lysine 366, 425–426 (NW), and valine 575 each bind pyrroloquinoline quinone. The region spanning 619–708 (YDPAKVEAGT…GTADAIRPKP (90 aa)) is the Cytochrome c domain. Heme c contacts are provided by cysteine 635, cysteine 638, histidine 639, and methionine 678.

It belongs to the bacterial PQQ dehydrogenase family. As to quaternary structure, monomer. Requires pyrroloquinoline quinone as cofactor. Ca(2+) serves as cofactor. The cofactor is heme c. Post-translationally, in the crystallographic structures Trp-543 is oxidized to 2'-hydroxytryptophan.

Its subcellular location is the periplasm. The catalysed reaction is 2 oxidized [azurin] + a primary alcohol = 2 reduced [azurin] + an aldehyde + 2 H(+). Its function is as follows. Catalyzes the dye-linked oxidation of primary alcohols to the corresponding aldehydes and the (subsequent) oxidation of the aldehydes to carboxylic acids. Methanol is not a substrate. The chain is Quinohemoprotein alcohol dehydrogenase from Comamonas testosteroni (Pseudomonas testosteroni).